We begin with the raw amino-acid sequence, 338 residues long: MRLADVAERFGATLDCPEHGDRPVLGVAPLETATATDISFLANPKYTALLQTTQAAAVFVRPDFQGEAACPLLRVPHPYLAFAKCIEWFYPQPKPVAKIHPTAILGADVVLGAEVTIGAYTVIGDRVRIGDRTVIDSHCTLYDDVVIGSDCRIYSHCALRERVQLGDRVILQNSVVLGSDGFGYVPLPDGRHYKIPQVGTVVIGNDVEIGAGTTIDRATLGETTVANGTKIDNLTMVAHNCTIGENAILCAQVGLAGSTHIGNHVVLAGQVGAAGHLTIGDRTVVSAKSGISSSVPPDSRMGGIPAMDQTLYLKVSAAVKQLPDLLKRVRKLEAKVGE.

The active-site Proton acceptor is the His-239.

This sequence belongs to the transferase hexapeptide repeat family. LpxD subfamily. Homotrimer.

It catalyses the reaction a UDP-3-O-[(3R)-3-hydroxyacyl]-alpha-D-glucosamine + a (3R)-hydroxyacyl-[ACP] = a UDP-2-N,3-O-bis[(3R)-3-hydroxyacyl]-alpha-D-glucosamine + holo-[ACP] + H(+). It functions in the pathway bacterial outer membrane biogenesis; LPS lipid A biosynthesis. Functionally, catalyzes the N-acylation of UDP-3-O-acylglucosamine using 3-hydroxyacyl-ACP as the acyl donor. Is involved in the biosynthesis of lipid A, a phosphorylated glycolipid that anchors the lipopolysaccharide to the outer membrane of the cell. The polypeptide is UDP-3-O-acylglucosamine N-acyltransferase (Thermosynechococcus vestitus (strain NIES-2133 / IAM M-273 / BP-1)).